The following is a 450-amino-acid chain: FAD-linked oxidoreductase penO (450 aa).

The region spanning 32–203 is the FAD-binding PCMH-type domain; sequence PPELPYAIVK…TRFFIRTRPA (172 aa).

This sequence belongs to the oxygen-dependent FAD-linked oxidoreductase family. FAD is required as a cofactor.

It participates in secondary metabolite biosynthesis. In terms of biological role, FAD-linked oxidoreductase; part of the gene cluster that mediates the biosynthesis of the indole diterpenes penitrems. The geranylgeranyl diphosphate (GGPP) synthase penG catalyzes the first step in penitrem biosynthesis via conversion of farnesyl pyrophosphate and isopentyl pyrophosphate into geranylgeranyl pyrophosphate (GGPP). Condensation of indole-3-glycerol phosphate with GGPP by the prenyl transferase penC then forms 3-geranylgeranylindole (3-GGI). Epoxidation by the FAD-dependent monooxygenase penM leads to a epoxidized-GGI that is substrate of the terpene cyclase penB for cyclization to yield paspaline. Paspaline is subsequently converted to 13-desoxypaxilline by the cytochrome P450 monooxygenase penP, the latter being then converted to paxilline by the cytochrome P450 monooxygenase penQ. Paxilline is converted to beta-paxitriol via C-10 ketoreduction by the short-chain dehydrogenase PC-15 which can be monoprenylated at the C-20 by the indole diterpene prenyltransferase penD. A two-step elimination (acetylation and elimination) process performed by the O-acetyltransferase PC-16 and the P.simplicissimum ptmI-ortholog not yet identified in P.crustosum, leads to the production of the prenylated form of penijanthine. The FAD-linked oxidoreductase ptmO then converts the prenylated form of penijanthine into PC-M5 which is in turn transformed into PC-M4 by the aromatic dimethylallyltransferase PC-22. A series of oxidation steps involving 4 cytochrome P450 monooxygenases (PC-21, PC-05, PC-23, PC-20) and a FAD-dependent monooxygenase (PC-14) are required for the transformation of PC-M4 to penitrems A and E. Synthesis of these final products is proposed to proceed via penitrems D and C (PC-21, PC-05, PC-14) and penitrems B and F (PC-21, PC-05, PC-14, PC-23). This is FAD-linked oxidoreductase penO from Penicillium crustosum (Blue mold fungus).